A 31-amino-acid polypeptide reads, in one-letter code: Cytochrome b6-f complex subunit 6 (31 aa).

The helical transmembrane segment at isoleucine 4 to serine 26 threads the bilayer.

It belongs to the PetL family. In terms of assembly, the 4 large subunits of the cytochrome b6-f complex are cytochrome b6, subunit IV (17 kDa polypeptide, PetD), cytochrome f and the Rieske protein, while the 4 small subunits are PetG, PetL, PetM and PetN. The complex functions as a dimer.

The protein localises to the plastid. It is found in the chloroplast thylakoid membrane. In terms of biological role, component of the cytochrome b6-f complex, which mediates electron transfer between photosystem II (PSII) and photosystem I (PSI), cyclic electron flow around PSI, and state transitions. PetL is important for photoautotrophic growth as well as for electron transfer efficiency and stability of the cytochrome b6-f complex. This Buxus microphylla (Littleleaf boxwood) protein is Cytochrome b6-f complex subunit 6.